Here is a 142-residue protein sequence, read N- to C-terminus: 5a,11a-dehydrotetracycline/5a,11a-dehydrooxytetracycline reductase (142 aa).

The protein belongs to the pyridoxamine 5'-phosphate oxidase family.

It carries out the reaction tetracycline + oxidized coenzyme F420-(gamma-L-Glu)(n) + H(+) = 5a,11a-dehydrotetracycline + reduced coenzyme F420-(gamma-L-Glu)(n). The enzyme catalyses oxytetracycline + oxidized coenzyme F420-(gamma-L-Glu)(n) + H(+) = 5a,11a-dehydrooxytetracycline + reduced coenzyme F420-(gamma-L-Glu)(n). It participates in antibiotic biosynthesis; oxytetracycline biosynthesis. Functionally, involved in the biosynthesis of the antibiotics tetracycline and oxytetracycline. Catalyzes the C(5) reduction of 5a,11a-dehydrooxytetracycline to yield oxytetracycline as a major product. Also catalyzes the C(12) reduction of 5a,11a-dehydrotetracycline (12-dehydrotetracycline) to produce tetracycline as a minor product. In Streptomyces rimosus subsp. rimosus (strain ATCC 10970 / DSM 40260 / JCM 4667 / NRRL 2234), this protein is 5a,11a-dehydrotetracycline/5a,11a-dehydrooxytetracycline reductase.